Here is a 246-residue protein sequence, read N- to C-terminus: High mobility group protein 1 (246 aa).

The segment at residues 106-179 (PKKPLTVFFA…NYQREKSKYL (74 aa)) is a DNA-binding region (HMG box). The segment at 179–246 (LEAKKNGTLP…KKKDKSNSSI (68 aa)) is disordered. The segment covering 214 to 227 (PVEKRPHDDDGSSE) has biased composition (basic and acidic residues). Residues 228 to 238 (KKKKKKKKDKK) show a composition bias toward basic residues.

As to quaternary structure, interacts with FPR1. Interacts with an unidentified DNA helicase. Associates with rDNA.

It localises to the nucleus. It is found in the nucleolus. Functionally, DNA-binding protein that is probably part of the rDNA transcription apparatus. Acts synergetically with the RPA49 subunit of RNA polymerase I during rDNA transcription. May participate in mutagenesis control. The polypeptide is High mobility group protein 1 (HMO1) (Saccharomyces cerevisiae (strain ATCC 204508 / S288c) (Baker's yeast)).